The primary structure comprises 246 residues: Probable H/ACA ribonucleoprotein complex subunit 1-like protein (246 aa).

Disordered regions lie at residues 1–61 (MSFR…GGYD) and 155–246 (PQVG…TKFD). RGG-box stretches follow at residues 4 to 59 (RGGR…GRGG) and 161 to 223 (RGRG…RGRG). Residues 168 to 180 (RGGDRGRGGDRGR) show a composition bias toward basic and acidic residues. Over residues 181–221 (GGFGGRGGGGGGFRGGSRGGFGGGDRGGFRGGRGGDFGGRG) the composition is skewed to gly residues.

The protein belongs to the GAR1 family. Component of the small nucleolar ribonucleoprotein particle containing H/ACA-type snoRNAs (H/ACA snoRNPs).

Its subcellular location is the nucleus. The protein resides in the nucleolus. Functionally, required for ribosome biogenesis. Part of a complex which catalyzes pseudouridylation of rRNA. This involves the isomerization of uridine such that the ribose is subsequently attached to C5, instead of the normal N1. Pseudouridine ('psi') residues may serve to stabilize the conformation of rRNAs. This is Probable H/ACA ribonucleoprotein complex subunit 1-like protein from Caenorhabditis briggsae.